The primary structure comprises 299 residues: Sulfate adenylyltransferase subunit 2 (299 aa).

Belongs to the PAPS reductase family. CysD subfamily. Heterodimer composed of CysD, the smaller subunit, and CysN.

The enzyme catalyses sulfate + ATP + H(+) = adenosine 5'-phosphosulfate + diphosphate. It functions in the pathway sulfur metabolism; hydrogen sulfide biosynthesis; sulfite from sulfate: step 1/3. With CysN forms the ATP sulfurylase (ATPS) that catalyzes the adenylation of sulfate producing adenosine 5'-phosphosulfate (APS) and diphosphate, the first enzymatic step in sulfur assimilation pathway. APS synthesis involves the formation of a high-energy phosphoric-sulfuric acid anhydride bond driven by GTP hydrolysis by CysN coupled to ATP hydrolysis by CysD. The protein is Sulfate adenylyltransferase subunit 2 of Colwellia psychrerythraea (strain 34H / ATCC BAA-681) (Vibrio psychroerythus).